The chain runs to 392 residues: Nicotinate phosphoribosyltransferase (392 aa).

Residue His-214 is modified to Phosphohistidine; by autocatalysis.

It belongs to the NAPRTase family. Post-translationally, transiently phosphorylated on a His residue during the reaction cycle. Phosphorylation strongly increases the affinity for substrates and increases the rate of nicotinate D-ribonucleotide production. Dephosphorylation regenerates the low-affinity form of the enzyme, leading to product release.

It catalyses the reaction nicotinate + 5-phospho-alpha-D-ribose 1-diphosphate + ATP + H2O = nicotinate beta-D-ribonucleotide + ADP + phosphate + diphosphate. Its pathway is cofactor biosynthesis; NAD(+) biosynthesis; nicotinate D-ribonucleotide from nicotinate: step 1/1. Its function is as follows. Catalyzes the synthesis of beta-nicotinate D-ribonucleotide from nicotinate and 5-phospho-D-ribose 1-phosphate at the expense of ATP. This is Nicotinate phosphoribosyltransferase from Xanthomonas axonopodis pv. citri (strain 306).